The primary structure comprises 269 residues: 5'-nucleotidase SurE (269 aa).

Residues aspartate 11, aspartate 12, serine 43, and asparagine 101 each coordinate a divalent metal cation.

This sequence belongs to the SurE nucleotidase family. A divalent metal cation serves as cofactor.

The protein localises to the cytoplasm. It carries out the reaction a ribonucleoside 5'-phosphate + H2O = a ribonucleoside + phosphate. Functionally, nucleotidase that shows phosphatase activity on nucleoside 5'-monophosphates. The protein is 5'-nucleotidase SurE of Synechococcus sp. (strain WH7803).